The following is a 341-amino-acid chain: uncharacterized protein (341 aa).

Positions 1–12 (NSRIAHVPKSKK) are enriched in basic residues. Disordered regions lie at residues 1–21 (NSRIAHVPKSKKPLNSASPRF) and 291–317 (KARMQMSGKNYQQRPSRTTSPAVNPED). The span at 297-312 (SGKNYQQRPSRTTSPA) shows a compositional bias: polar residues.

This is an uncharacterized protein from Lachancea kluyveri (strain ATCC 58438 / CBS 3082 / BCRC 21498 / NBRC 1685 / JCM 7257 / NCYC 543 / NRRL Y-12651) (Yeast).